The sequence spans 580 residues: Long-chain-fatty-acid--AMP ligase FadD28 (580 aa).

Residues 421 to 440 (SERTFGGKIVTPSPGTPEGP) are disordered.

This sequence belongs to the ATP-dependent AMP-binding enzyme family.

The enzyme catalyses holo-[mycocerosate synthase] + a long-chain fatty acid + ATP = a long-chain fatty acyl-[mycocerosate synthase] + AMP + diphosphate. It catalyses the reaction a long-chain fatty acid + ATP + H(+) = a long-chain fatty acyl-AMP + diphosphate. The catalysed reaction is holo-[mycocerosate synthase] + a long-chain fatty acyl-AMP = a long-chain fatty acyl-[mycocerosate synthase] + AMP + H(+). It functions in the pathway lipid metabolism; fatty acid biosynthesis. Involved in the biosynthesis of phthiocerol dimycocerosate (PDIM), a cell wall-associated lipid found only in pathogenic mycobacteria. Catalyzes the activation of long-chain fatty acids as acyl-adenylates (acyl-AMP), which are then transferred to the multifunctional polyketide synthase Mas for further chain extension. This is Long-chain-fatty-acid--AMP ligase FadD28 (fadD28) from Mycobacterium tuberculosis (strain CDC 1551 / Oshkosh).